The chain runs to 398 residues: Acetate kinase (398 aa).

Mg(2+) is bound at residue asparagine 7. Lysine 14 is a binding site for ATP. Arginine 91 serves as a coordination point for substrate. The Proton donor/acceptor role is filled by aspartate 148. Residues 208–212 (HLGNG), 283–285 (DSR), and 331–335 (GIGEN) each bind ATP. Mg(2+) is bound at residue glutamate 384.

The protein belongs to the acetokinase family. Homodimer. Mg(2+) is required as a cofactor. Requires Mn(2+) as cofactor.

It localises to the cytoplasm. It catalyses the reaction acetate + ATP = acetyl phosphate + ADP. It participates in metabolic intermediate biosynthesis; acetyl-CoA biosynthesis; acetyl-CoA from acetate: step 1/2. Functionally, catalyzes the formation of acetyl phosphate from acetate and ATP. Can also catalyze the reverse reaction. This chain is Acetate kinase, found in Halothermothrix orenii (strain H 168 / OCM 544 / DSM 9562).